Here is a 446-residue protein sequence, read N- to C-terminus: Casein kinase I homolog 1 (446 aa).

One can recognise a Protein kinase domain in the interval tyrosine 12 to leucine 274. ATP contacts are provided by residues isoleucine 18–isoleucine 26 and lysine 41. The Proton acceptor role is filled by aspartate 131. Positions lysine 308–serine 430 are disordered. The residue at position 329 (serine 329) is a Phosphoserine. The segment covering proline 332–serine 345 has biased composition (polar residues). Positions lysine 346 to alanine 355 are enriched in basic and acidic residues. Residues asparagine 360 to proline 397 are compositionally biased toward polar residues. The span at aspartate 401–arginine 412 shows a compositional bias: basic and acidic residues.

This sequence belongs to the protein kinase superfamily. CK1 Ser/Thr protein kinase family. Casein kinase I subfamily.

The protein localises to the cytoplasm. It carries out the reaction L-seryl-[protein] + ATP = O-phospho-L-seryl-[protein] + ADP + H(+). It catalyses the reaction L-threonyl-[protein] + ATP = O-phospho-L-threonyl-[protein] + ADP + H(+). Functionally, casein kinases are operationally defined by their preferential utilization of acidic proteins such as caseins as substrates. This chain is Casein kinase I homolog 1 (cki1), found in Schizosaccharomyces pombe (strain 972 / ATCC 24843) (Fission yeast).